We begin with the raw amino-acid sequence, 81 residues long: Large ribosomal subunit protein bL27 (81 aa).

Over residues methionine 1–lysine 11 the composition is skewed to polar residues. A disordered region spans residues methionine 1–leucine 21.

Belongs to the bacterial ribosomal protein bL27 family.

This Borrelia hermsii (strain HS1 / DAH) protein is Large ribosomal subunit protein bL27.